A 297-amino-acid polypeptide reads, in one-letter code: tRNA pseudouridine synthase B (297 aa).

Residue D39 is the Nucleophile of the active site.

The protein belongs to the pseudouridine synthase TruB family. Type 1 subfamily.

It carries out the reaction uridine(55) in tRNA = pseudouridine(55) in tRNA. Its function is as follows. Responsible for synthesis of pseudouridine from uracil-55 in the psi GC loop of transfer RNAs. The chain is tRNA pseudouridine synthase B from Lactobacillus johnsonii (strain CNCM I-12250 / La1 / NCC 533).